The primary structure comprises 446 residues: Divalent metal cation transporter MntH (446 aa).

Helical transmembrane passes span 32–52 (FSFL…GNWI), 59–79 (AQFG…AMLL), 107–127 (AFVF…AEVI), 139–159 (IPLL…LFIM), 168–188 (AIVG…VFIA), 210–230 (GALF…NLYL), 264–284 (SIAF…FFGV), 303–323 (PLLG…ALLA), 355–375 (LITR…FNSN), 381–401 (QLLV…LIPL), and 420–440 (VNII…YLII).

Belongs to the NRAMP family.

Its subcellular location is the cell membrane. Its function is as follows. H(+)-stimulated, divalent metal cation uptake system. The sequence is that of Divalent metal cation transporter MntH from Staphylococcus saprophyticus subsp. saprophyticus (strain ATCC 15305 / DSM 20229 / NCIMB 8711 / NCTC 7292 / S-41).